An 80-amino-acid polypeptide reads, in one-letter code: Conotoxin Pu11.1 (80 aa).

A signal peptide spans 1-19; sequence MKLVLAIVLILMLLSLSTG. The propeptide occupies 20 to 42; that stretch reads AEMSDNHASRSATALTDRLLGPK. Intrachain disulfides connect C46-C60, C53-C65, C59-C72, and C64-C79.

Belongs to the conotoxin I3 superfamily. Expressed by the venom duct.

The protein localises to the secreted. The polypeptide is Conotoxin Pu11.1 (Conus pulicarius (Flea-bitten cone)).